Here is a 1347-residue protein sequence, read N- to C-terminus: Ubinuclein-2 (1347 aa).

The interval 1 to 134 is disordered; that stretch reads MAEPRRVAFI…ETVRLELVLK (134 aa). Ser-13 bears the Phosphoserine mark. 2 stretches are compositionally biased toward basic and acidic residues: residues 16-37 and 67-79; these read RRRE…EPPR and SREK…EVSR. The segment covering 93–110 has biased composition (pro residues); that stretch reads PEPPPPFPPLPLQPPPPR. Residues 122 to 134 show a composition bias toward basic and acidic residues; sequence PPRETVRLELVLK. The residue at position 243 (Thr-243) is a Phosphothreonine. At Ser-250 the chain carries Phosphoserine. Residues 250-301 are disordered; sequence SDTEEDDITDNQKHKPPKVPKIKEDDIEMKKRKRKEEGEKEKKPRKKVPKQL. A Phosphothreonine modification is found at Thr-252. Residue Lys-272 forms a Glycyl lysine isopeptide (Lys-Gly) (interchain with G-Cter in SUMO2) linkage. 5 positions are modified to phosphoserine: Ser-311, Ser-416, Ser-419, Ser-422, and Ser-584. Disordered stretches follow at residues 573–597, 707–740, 815–849, 880–913, 981–1006, and 1035–1218; these read LQTD…KRVI, ECSP…AAAS, LATP…DLAH, GLQR…HALG, RLPL…TVPS, and ASPK…SSVV. The segment covering 574–584 has biased composition (basic and acidic residues); that stretch reads QTDEEREKNGS. A compositionally biased stretch (low complexity) spans 721 to 740; it reads VASVSGPPTSSSTAAIAAAS. Polar residues predominate over residues 823-832; sequence STQTTHSSSL. The segment covering 880 to 911 has biased composition (low complexity); the sequence is GLQRSSQIHTSSSSQTHVSSSSQAQIAASSHA. Residues 985-996 are compositionally biased toward polar residues; it reads STPSPGNGSQGS. The span at 1035 to 1045 shows a compositional bias: low complexity; that stretch reads ASPKLAASPKP. A compositionally biased stretch (pro residues) spans 1046 to 1060; sequence ATSPKPLPSPKPSAS. Low complexity-rich tracts occupy residues 1061–1070 and 1077–1095; these read PKPSLSAKPS and SKSN…SSPN. An N6-acetyllysine modification is found at Lys-1068. 2 stretches are compositionally biased toward polar residues: residues 1101 to 1164 and 1174 to 1185; these read GSHS…NSLS and RGSNLNSSGANR. Ser-1123 carries the post-translational modification Phosphoserine. Lys-1148 carries the post-translational modification N6-acetyllysine.

This sequence belongs to the ubinuclein family. In terms of tissue distribution, expressed in several cell lines tested, including primary and transformed cell lines.

The chain is Ubinuclein-2 (UBN2) from Homo sapiens (Human).